Consider the following 175-residue polypeptide: Co-chaperone protein HscB homolog (175 aa).

The J domain maps to 8 to 80; sequence DFFSLFGLPR…LNRARYLLQL (73 aa).

This sequence belongs to the HscB family. In terms of assembly, interacts with HscA and stimulates its ATPase activity.

In terms of biological role, co-chaperone involved in the maturation of iron-sulfur cluster-containing proteins. Seems to help targeting proteins to be folded toward HscA. The chain is Co-chaperone protein HscB homolog from Chromobacterium violaceum (strain ATCC 12472 / DSM 30191 / JCM 1249 / CCUG 213 / NBRC 12614 / NCIMB 9131 / NCTC 9757 / MK).